The primary structure comprises 267 residues: Small ribosomal subunit protein uS3 (267 aa).

The KH type-2 domain maps to 39-114 (IRKYLETNLK…RVNINIVEIR (76 aa)). Low complexity predominate over residues 229 to 248 (ANNRGRGNNRGRGNSRQNGG). Positions 229 to 267 (ANNRGRGNNRGRGNSRQNGGRSRRPRQGQASTQGRGGNN) are disordered.

It belongs to the universal ribosomal protein uS3 family. Part of the 30S ribosomal subunit. Forms a tight complex with proteins S10 and S14.

Functionally, binds the lower part of the 30S subunit head. Binds mRNA in the 70S ribosome, positioning it for translation. The chain is Small ribosomal subunit protein uS3 from Oenococcus oeni (strain ATCC BAA-331 / PSU-1).